Here is a 151-residue protein sequence, read N- to C-terminus: Transcriptional regulator MraZ (151 aa).

SpoVT-AbrB domains are found at residues T5–T56 and S85–R128.

It belongs to the MraZ family. In terms of assembly, forms oligomers.

The protein localises to the cytoplasm. It is found in the nucleoid. In Acidithiobacillus ferrooxidans (strain ATCC 23270 / DSM 14882 / CIP 104768 / NCIMB 8455) (Ferrobacillus ferrooxidans (strain ATCC 23270)), this protein is Transcriptional regulator MraZ.